Reading from the N-terminus, the 330-residue chain is MDQYLIKMSTKSKNNDKTEQNIPIKENTTRQTKDAKEKIATANKRKNKDTPEIIKDKENADTENPPKRRSARLTRSTRSMAEDGTPSPEKEIPEKLPFIKYRGAIKYYTESHEIAASADEVMQWVEKQTNADVVPLAFDMEWPFSFQTGPGKSSVIQICVEERCCYVYQLSKLKRIPAALVALLNHSKVRLHGVNIKADFRKLERDFPEVAAEPLIEKCIDLGVWCNEVCETGGRWSLERLANFIAKKAMDKSKKVRMSKWHVIPLDENQLMYAAIDVYIGQVIYRDIEQREKTKLKNEAEFKDQNGDAAFKAVKALGETFLAKINEVTL.

The disordered stretch occupies residues 1 to 92 (MDQYLIKMST…DGTPSPEKEI (92 aa)). Composition is skewed to basic and acidic residues over residues 27–39 (NTTR…KEKI) and 48–66 (KDTP…ENPP). 2 positions are modified to phosphoserine: Ser79 and Ser87. The region spanning 117–289 (SADEVMQWVE…IGQVIYRDIE (173 aa)) is the 3'-5' exonuclease domain. Positions 139, 141, and 277 each coordinate Mg(2+).

The protein belongs to the WRNexo family.

It localises to the nucleus. Its function is as follows. Has exonuclease activity on both single-stranded and duplex templates bearing overhangs, but not blunt ended duplex DNA, and cleaves in a 3'-5' direction. Essential for the formation of DNA replication focal centers. Has an important role in maintaining genome stability. This chain is 3'-5' exonuclease, found in Drosophila virilis (Fruit fly).